The primary structure comprises 474 residues: 1-aminocyclopropane-1-carboxylate synthase 4 (474 aa).

Positions 47 and 85 each coordinate substrate. At Lys-273 the chain carries N6-(pyridoxal phosphate)lysine.

This sequence belongs to the class-I pyridoxal-phosphate-dependent aminotransferase family. As to quaternary structure, homodimer and heterodimer. In vivo, the relevance of heterodimerization with other ACS enzymes is however unsure. Interacts with XBAT32. Interacts (via its C-terminal region) with ETO1 and EOL1. Pyridoxal 5'-phosphate serves as cofactor. In terms of processing, ubiquitinated by XBAT32. Ubiquitination probably leads to its subsequent degradation, thus controlling ethylene production. In terms of tissue distribution, expressed in roots, leaves and flowers.

It carries out the reaction S-adenosyl-L-methionine = 1-aminocyclopropane-1-carboxylate + S-methyl-5'-thioadenosine + H(+). It functions in the pathway alkene biosynthesis; ethylene biosynthesis via S-adenosyl-L-methionine; ethylene from S-adenosyl-L-methionine: step 1/2. Functionally, 1-aminocyclopropane-1-carboxylate synthase (ACS) enzymes catalyze the conversion of S-adenosyl-L-methionine (SAM) into 1-aminocyclopropane-1-carboxylate (ACC), a direct precursor of ethylene. The chain is 1-aminocyclopropane-1-carboxylate synthase 4 (ACS4) from Arabidopsis thaliana (Mouse-ear cress).